The sequence spans 449 residues: Phosphoglucosamine mutase (449 aa).

Catalysis depends on serine 100, which acts as the Phosphoserine intermediate. Mg(2+)-binding residues include serine 100, aspartate 240, aspartate 242, and aspartate 244. The residue at position 100 (serine 100) is a Phosphoserine.

The protein belongs to the phosphohexose mutase family. Mg(2+) serves as cofactor. Post-translationally, activated by phosphorylation.

It catalyses the reaction alpha-D-glucosamine 1-phosphate = D-glucosamine 6-phosphate. Functionally, catalyzes the conversion of glucosamine-6-phosphate to glucosamine-1-phosphate. In Clostridium novyi (strain NT), this protein is Phosphoglucosamine mutase.